Here is a 926-residue protein sequence, read N- to C-terminus: Ubiquitin carboxyl-terminal hydrolase 4 (926 aa).

Residues 205 to 328 (SQMEILLIDI…WLKSNYGRQV (124 aa)) form the Rhodanese domain. Ser-443 carries the phosphoserine modification. The region spanning 562 to 923 (VGLENLGNSC…NAYVLFYHRV (362 aa)) is the USP domain. Cys-571 acts as the Nucleophile in catalysis. Residue His-880 is the Proton acceptor of the active site.

The protein belongs to the peptidase C19 family. Interacts with BRO1, RFU1 and VPS32. Associates with the 26S proteasome.

It is found in the cytoplasm. The protein resides in the late endosome membrane. The enzyme catalyses Thiol-dependent hydrolysis of ester, thioester, amide, peptide and isopeptide bonds formed by the C-terminal Gly of ubiquitin (a 76-residue protein attached to proteins as an intracellular targeting signal).. Its activity is regulated as follows. RFU1 is an inhibitor of deubiquitination activity. Its function is as follows. Ubiquitin thioesterase that acts at the late endosome/prevacuolar compartment to recover ubiquitin from ubiquitinated membrane proteins en route to the vacuole. Also removes ubiquitin from soluble proteins targeted to proteasomes. Is essential to maintain a normal level of free ubiquitin. Involved in the ammonium-induced down-regulation of the GAP1 permease and the UME3 destruction in response to oxidative stress. Has a role in the RAD9 checkpoint response to TOP1 poisons. Required for promoting coordination of DNA replication and avoids DNA overreplication. The protein is Ubiquitin carboxyl-terminal hydrolase 4 (DOA4) of Saccharomyces cerevisiae (strain RM11-1a) (Baker's yeast).